Consider the following 95-residue polypeptide: Suppressor of silencing 2b (95 aa).

The interval 8 to 18 (LHEIIRKLERM) is homotetramerization. Residues 8–40 (LHEIIRKLERMNQKKQAQRKRHKLNRKERGHKS) are a coiled coil. The disordered stretch occupies residues 16–49 (ERMNQKKQAQRKRHKLNRKERGHKSPSEQRRSEL). The segment covering 23–37 (QAQRKRHKLNRKERG) has biased composition (basic residues). A Nuclear localization signal motif is present at residues 26–30 (RKRHK). The span at 38 to 49 (HKSPSEQRRSEL) shows a compositional bias: basic and acidic residues.

The protein belongs to the cucumovirus/ilarvirus protein 2b family. As to quaternary structure, homodimer. Homotetramer (dimer of dimers).

It localises to the host nucleus. Acts as a suppressor of RNA-mediated gene silencing, also known as post-transcriptional gene silencing (PTGS), a mechanism of plant viral defense that limits the accumulation of viral RNAs. Forms a homodimer to measure siRNA duplex in a length-preference mode. Binds to both siRNA duplexes (19bp) and long siRNA duplexes (30bp). The chain is Suppressor of silencing 2b from Canna (Florist's daisy).